The primary structure comprises 459 residues: Exodeoxyribonuclease 7 large subunit (459 aa).

This sequence belongs to the XseA family. In terms of assembly, heterooligomer composed of large and small subunits.

The protein resides in the cytoplasm. It carries out the reaction Exonucleolytic cleavage in either 5'- to 3'- or 3'- to 5'-direction to yield nucleoside 5'-phosphates.. Its function is as follows. Bidirectionally degrades single-stranded DNA into large acid-insoluble oligonucleotides, which are then degraded further into small acid-soluble oligonucleotides. This is Exodeoxyribonuclease 7 large subunit from Pseudomonas aeruginosa (strain ATCC 15692 / DSM 22644 / CIP 104116 / JCM 14847 / LMG 12228 / 1C / PRS 101 / PAO1).